The chain runs to 455 residues: Kynurenine 3-monooxygenase (455 aa).

The protein belongs to the aromatic-ring hydroxylase family. KMO subfamily. Requires FAD as cofactor.

The enzyme catalyses L-kynurenine + NADPH + O2 + H(+) = 3-hydroxy-L-kynurenine + NADP(+) + H2O. The protein operates within cofactor biosynthesis; NAD(+) biosynthesis; quinolinate from L-kynurenine: step 1/3. Functionally, catalyzes the hydroxylation of L-kynurenine (L-Kyn) to form 3-hydroxy-L-kynurenine (L-3OHKyn). Required for synthesis of quinolinic acid. This chain is Kynurenine 3-monooxygenase, found in Xanthomonas oryzae pv. oryzae (strain MAFF 311018).